We begin with the raw amino-acid sequence, 250 residues long: 2,3-bisphosphoglycerate-dependent phosphoglycerate mutase (250 aa).

Residues 8–15 (RHGESTWN), 21–22 (TG), arginine 60, 87–90 (ERHY), lysine 98, and 114–115 (RR) contribute to the substrate site. Histidine 9 serves as the catalytic Tele-phosphohistidine intermediate. Residue glutamate 87 is the Proton donor/acceptor of the active site. A disordered region spans residues 116-135 (SYDTPPPPLAANDPRSERSD). 183–184 (GN) provides a ligand contact to substrate.

This sequence belongs to the phosphoglycerate mutase family. BPG-dependent PGAM subfamily. Homodimer.

It catalyses the reaction (2R)-2-phosphoglycerate = (2R)-3-phosphoglycerate. The protein operates within carbohydrate degradation; glycolysis; pyruvate from D-glyceraldehyde 3-phosphate: step 3/5. In terms of biological role, catalyzes the interconversion of 2-phosphoglycerate and 3-phosphoglycerate. The polypeptide is 2,3-bisphosphoglycerate-dependent phosphoglycerate mutase (Polaromonas naphthalenivorans (strain CJ2)).